A 414-amino-acid chain; its full sequence is Dual-specificity RNA methyltransferase RlmN (414 aa).

Over residues 1–13 the composition is skewed to polar residues; it reads MTSAVGISVPNTD. Positions 1-22 are disordered; that stretch reads MTSAVGISVPNTDAQSSQSASQ. Catalysis depends on Glu124, which acts as the Proton acceptor. The Radical SAM core domain occupies 134 to 377; that stretch reads TGSRKTLCIS…CTIRQTRGDD (244 aa). Cys141 and Cys382 form a disulfide bridge. [4Fe-4S] cluster contacts are provided by Cys148, Cys152, and Cys155. Residues 204-205, Ser236, 258-260, and Asn339 each bind S-adenosyl-L-methionine; these read GE and SLH. Catalysis depends on Cys382, which acts as the S-methylcysteine intermediate.

The protein belongs to the radical SAM superfamily. RlmN family. [4Fe-4S] cluster serves as cofactor.

It localises to the cytoplasm. The enzyme catalyses adenosine(2503) in 23S rRNA + 2 reduced [2Fe-2S]-[ferredoxin] + 2 S-adenosyl-L-methionine = 2-methyladenosine(2503) in 23S rRNA + 5'-deoxyadenosine + L-methionine + 2 oxidized [2Fe-2S]-[ferredoxin] + S-adenosyl-L-homocysteine. The catalysed reaction is adenosine(37) in tRNA + 2 reduced [2Fe-2S]-[ferredoxin] + 2 S-adenosyl-L-methionine = 2-methyladenosine(37) in tRNA + 5'-deoxyadenosine + L-methionine + 2 oxidized [2Fe-2S]-[ferredoxin] + S-adenosyl-L-homocysteine. In terms of biological role, specifically methylates position 2 of adenine 2503 in 23S rRNA and position 2 of adenine 37 in tRNAs. m2A2503 modification seems to play a crucial role in the proofreading step occurring at the peptidyl transferase center and thus would serve to optimize ribosomal fidelity. The protein is Dual-specificity RNA methyltransferase RlmN of Acinetobacter baylyi (strain ATCC 33305 / BD413 / ADP1).